The primary structure comprises 232 residues: Enolase-phosphatase E1 (232 aa).

The protein belongs to the HAD-like hydrolase superfamily. MasA/MtnC family. As to quaternary structure, monomer. Mg(2+) serves as cofactor.

The catalysed reaction is 5-methylsulfanyl-2,3-dioxopentyl phosphate + H2O = 1,2-dihydroxy-5-(methylsulfanyl)pent-1-en-3-one + phosphate. It participates in amino-acid biosynthesis; L-methionine biosynthesis via salvage pathway; L-methionine from S-methyl-5-thio-alpha-D-ribose 1-phosphate: step 3/6. It functions in the pathway amino-acid biosynthesis; L-methionine biosynthesis via salvage pathway; L-methionine from S-methyl-5-thio-alpha-D-ribose 1-phosphate: step 4/6. Functionally, bifunctional enzyme that catalyzes the enolization of 2,3-diketo-5-methylthiopentyl-1-phosphate (DK-MTP-1-P) into the intermediate 2-hydroxy-3-keto-5-methylthiopentenyl-1-phosphate (HK-MTPenyl-1-P), which is then dephosphorylated to form the acireductone 1,2-dihydroxy-3-keto-5-methylthiopentene (DHK-MTPene). The polypeptide is Enolase-phosphatase E1 (Nocardia farcinica (strain IFM 10152)).